The following is a 138-amino-acid chain: Small ribosomal subunit protein uS8c (138 aa).

It belongs to the universal ribosomal protein uS8 family. As to quaternary structure, part of the 30S ribosomal subunit.

Its subcellular location is the plastid. It is found in the chloroplast. Its function is as follows. One of the primary rRNA binding proteins, it binds directly to 16S rRNA central domain where it helps coordinate assembly of the platform of the 30S subunit. The sequence is that of Small ribosomal subunit protein uS8c (rps8) from Oenothera elata subsp. hookeri (Hooker's evening primrose).